Consider the following 524-residue polypeptide: Alkaline phosphatase, tissue-nonspecific isozyme (524 aa).

The first 17 residues, Met-1 to Ser-17, serve as a signal peptide directing secretion. Asp-60 serves as a coordination point for Mg(2+). Zn(2+) contacts are provided by Asp-60 and Ser-110. The Phosphoserine intermediate role is filled by Ser-110. At Ser-110 the chain carries Phosphoserine. A disulfide bond links Cys-139 and Cys-201. Residue Asn-140 is glycosylated (N-linked (GlcNAc...) asparagine). Thr-173 contributes to the Mg(2+) binding site. N-linked (GlcNAc...) asparagine glycosylation is present at Asn-230. Glu-235 lines the Ca(2+) pocket. Asn-271 carries an N-linked (GlcNAc...) asparagine glycan. Ca(2+) is bound by residues Phe-290 and Glu-291. The N-linked (GlcNAc...) asparagine glycan is linked to Asn-303. Asp-306 is a Ca(2+) binding site. Glu-332 serves as a coordination point for Mg(2+). Zn(2+)-binding residues include Asp-337, His-341, Asp-378, and His-379. A glycan (N-linked (GlcNAc...) asparagine) is linked at Asn-430. His-454 contacts Zn(2+). Cys-489 and Cys-497 are joined by a disulfide. Ser-501 carries the GPI-anchor amidated serine lipid modification. Residues Ser-502–Phe-524 constitute a propeptide, removed in mature form.

This sequence belongs to the alkaline phosphatase family. Homodimer. Mg(2+) serves as cofactor. Zn(2+) is required as a cofactor. Requires Ca(2+) as cofactor. N-glycosylated.

It is found in the cell membrane. It localises to the extracellular vesicle membrane. Its subcellular location is the mitochondrion membrane. The protein localises to the mitochondrion intermembrane space. The catalysed reaction is a phosphate monoester + H2O = an alcohol + phosphate. The enzyme catalyses diphosphate + H2O = 2 phosphate + H(+). It catalyses the reaction pyridoxal 5'-phosphate + H2O = pyridoxal + phosphate. It carries out the reaction phosphoethanolamine + H2O = ethanolamine + phosphate. The catalysed reaction is N-phosphocreatine + H2O = creatine + phosphate. The enzyme catalyses ATP + H2O = ADP + phosphate + H(+). It catalyses the reaction ADP + H2O = AMP + phosphate + H(+). It carries out the reaction AMP + H2O = adenosine + phosphate. With respect to regulation, phosphatase activity is specifically inhibited by 5-((5-chloro-2-methoxyphenyl)sulfonamido)nicotinamide (SBI-425). Its function is as follows. Alkaline phosphatase that metabolizes various phosphate compounds and plays a key role in skeletal mineralization and adaptive thermogenesis. Has broad substrate specificity and can hydrolyze a considerable variety of compounds: however, only a few substrates, such as diphosphate (inorganic pyrophosphate; PPi), pyridoxal 5'-phosphate (PLP) and N-phosphocreatine are natural substrates. Plays an essential role in skeletal and dental mineralization via its ability to hydrolyze extracellular diphosphate, a potent mineralization inhibitor, to phosphate: it thereby promotes hydroxyapatite crystal formation and increases inorganic phosphate concentration. Acts in a non-redundant manner with PHOSPHO1 in skeletal mineralization: while PHOSPHO1 mediates the initiation of hydroxyapatite crystallization in the matrix vesicles (MVs), ALPL/TNAP catalyzes the spread of hydroxyapatite crystallization in the extracellular matrix. Also promotes dephosphorylation of osteopontin (SSP1), an inhibitor of hydroxyapatite crystallization in its phosphorylated state; it is however unclear whether ALPL/TNAP mediates SSP1 dephosphorylation via a direct or indirect manner. Catalyzes dephosphorylation of PLP to pyridoxal (PL), the transportable form of vitamin B6, in order to provide a sufficient amount of PLP in the brain, an essential cofactor for enzymes catalyzing the synthesis of diverse neurotransmitters. Additionally, also able to mediate ATP degradation in a stepwise manner to adenosine, thereby regulating the availability of ligands for purinergic receptors. Also capable of dephosphorylating microbial products, such as lipopolysaccharides (LPS) as well as other phosphorylated small-molecules, such as poly-inosine:cytosine (poly I:C). Acts as a key regulator of adaptive thermogenesis as part of the futile creatine cycle: localizes to the mitochondria of thermogenic fat cells and acts by mediating hydrolysis of N-phosphocreatine to initiate a futile cycle of creatine dephosphorylation and phosphorylation. During the futile creatine cycle, creatine and N-phosphocreatine are in a futile cycle, which dissipates the high energy charge of N-phosphocreatine as heat without performing any mechanical or chemical work. In Rattus norvegicus (Rat), this protein is Alkaline phosphatase, tissue-nonspecific isozyme (Alpl).